Here is a 355-residue protein sequence, read N- to C-terminus: UDP-N-acetylglucosamine--N-acetylmuramyl-(pentapeptide) pyrophosphoryl-undecaprenol N-acetylglucosamine transferase (355 aa).

UDP-N-acetyl-alpha-D-glucosamine contacts are provided by residues 14-16 (TGG), Asn126, Arg162, Ser190, Ile245, 264-269 (ALTVCE), and Gln289.

It belongs to the glycosyltransferase 28 family. MurG subfamily.

The protein localises to the cell inner membrane. It carries out the reaction di-trans,octa-cis-undecaprenyl diphospho-N-acetyl-alpha-D-muramoyl-L-alanyl-D-glutamyl-meso-2,6-diaminopimeloyl-D-alanyl-D-alanine + UDP-N-acetyl-alpha-D-glucosamine = di-trans,octa-cis-undecaprenyl diphospho-[N-acetyl-alpha-D-glucosaminyl-(1-&gt;4)]-N-acetyl-alpha-D-muramoyl-L-alanyl-D-glutamyl-meso-2,6-diaminopimeloyl-D-alanyl-D-alanine + UDP + H(+). The protein operates within cell wall biogenesis; peptidoglycan biosynthesis. Cell wall formation. Catalyzes the transfer of a GlcNAc subunit on undecaprenyl-pyrophosphoryl-MurNAc-pentapeptide (lipid intermediate I) to form undecaprenyl-pyrophosphoryl-MurNAc-(pentapeptide)GlcNAc (lipid intermediate II). This Mannheimia succiniciproducens (strain KCTC 0769BP / MBEL55E) protein is UDP-N-acetylglucosamine--N-acetylmuramyl-(pentapeptide) pyrophosphoryl-undecaprenol N-acetylglucosamine transferase.